The primary structure comprises 47 residues: MDQAIYTLHEFMLHTKNWTYILMGVTLLVYVGYWLFLTGRDEKIRKY.

The helical transmembrane segment at 18 to 37 (WTYILMGVTLLVYVGYWLFL) threads the bilayer.

Its subcellular location is the cell membrane. Functionally, HMWC (high-molecular-weight cytochrome c), ORF2, ORF3, ORF4, ORF5 and ORF6 in the HMC operon form a transmembrane protein complex that allows electron flow from the periplasmic hydrogenase to the cytoplasmic enzymes that catalyze reduction of sulfates. This is Protein DVU_0533 from Nitratidesulfovibrio vulgaris (strain ATCC 29579 / DSM 644 / CCUG 34227 / NCIMB 8303 / VKM B-1760 / Hildenborough) (Desulfovibrio vulgaris).